A 174-amino-acid chain; its full sequence is Anthrone oxygenase CPUR_05435 (174 aa).

Helical transmembrane passes span 13–33 (VALA…AIMI), 56–76 (YGSV…GFAS), 88–108 (CLAA…AMIP), and 140–160 (WVVL…MGFT).

Belongs to the anthrone oxygenase family.

Its subcellular location is the membrane. The enzyme catalyses emodin anthrone + O2 = emodin + H2O + H(+). Anthrone oxygenase; part of the ergochrome gene cluster responsible for the typical purple-black color of the ergot sclerotia. The ergochrome gene cluster produces several ergot pigments including the yellow ergochrome secalonic acid and its derivatives, as well as the red anthraquinones endocrocin and clavorubin. The pathway begins with the synthesis of atrochrysone thioester by the polyketide synthase (PKS) CPUR_05437. The atrochrysone carboxyl ACP thioesterase CPUR_05436 then breaks the thioester bond and releases the atrochrysone carboxylic acid from CPUR_05437. The decarboxylase CPUR_05434 then catalyzes the concerted decarboxylation-elimination required to convert atochrysone carboxylic acid into emodin anthrone, which is further oxidized to emodin by the anthrone oxygenase CPUR_05435. Emodin is further modified to yield monodictyphenone via several steps involving CPUR_05427, CPUR_05428, CPUR_05429 and CPUR_05430. The short chain dehydrogenase/reductase CPUR_05418 then catalyzes the C-5 ketoreduction to give the xanthone skeleton of the monomeric units. Ergochromes formation requires further dimerization steps of different xanthone units, probably catalyzed by the cytochrome P450 monooxygenase CPUR_05419. CPUR_05425, CPUR_05426 and CPUR_05431 are unique to Claviceps, thus it is likely that they are involved in further modification of xanthone units or in their dimerization. The yellow ergochromes and the red anthraquinone pigments endocrocin and clavorubin are products from the same PKS derived precursors and the latter are likely shunt products in the pathway of xanthone biosynthesis. It is proposed that atrochrysone carboxylic acid released from the PKS CPUR_05437 can also be converted to endocrocin anthrone which is further oxidized into endocrocin by CPUR_05435. Endocrocin could be then modified to clavorubin, possibly by CPUR_05423 and CPUR_05431. Clavorubin is the principal anthraquinone metabolite produced by the cluster with a much higher yield compared to endocrocin. This Claviceps purpurea (strain 20.1) (Ergot fungus) protein is Anthrone oxygenase CPUR_05435.